The sequence spans 127 residues: Snaclec macrovipecetin subunit beta (127 aa).

Disulfide bonds link C4-C15, C32-C121, and C98-C113. Residues 11–122 form the C-type lectin domain; that stretch reads YEGHCYKVFD…CSRTYKFVCK (112 aa).

In terms of assembly, heterodimer of subunits alpha and beta; disulfide-linked. In terms of tissue distribution, expressed by the venom gland.

The protein resides in the secreted. Its function is as follows. Interferes with one step of hemostasis (modulation of platelet aggregation, or coagulation cascade, for example). The chain is Snaclec macrovipecetin subunit beta from Macrovipera lebetinus (Levantine viper).